A 171-amino-acid polypeptide reads, in one-letter code: Anthrone oxygenase dmxR16 (171 aa).

A run of 3 helical transmembrane segments spans residues 21–41 (VIAA…ISMI), 67–87 (GHII…FSAL), and 96–116 (YALA…FMTP). Asn118 and Asn129 each carry an N-linked (GlcNAc...) asparagine glycan. Residues 145-165 (WLHATRSMFPLIGAILGFTGI) traverse the membrane as a helical segment.

Belongs to the anthrone oxygenase family.

The protein resides in the membrane. It carries out the reaction emodin anthrone + O2 = emodin + H2O + H(+). It functions in the pathway secondary metabolite biosynthesis. Functionally, anthrone oxygenase; part of the gene cluster that mediates the biosynthesis of the dimeric xanthones cryptosporioptides. The pathway begins with the synthesis of atrochrysone thioester by the polyketide synthase dmx-nrPKS. The atrochrysone carboxyl ACP thioesterase dmxR1 then breaks the thioester bond and releases the atrochrysone carboxylic acid from dmx-nrPKS. Atrochrysone carboxylic acid is decarboxylated by the decarboxylase dmxR15, and oxidized by the anthrone oxygenase dmxR16 to yield emodin. Emodin is then reduced to emodin hydroquinone by the oxidoreductase dmxR7. A-ring reduction by the short chain dehydrogenase dmxR18, dehydration by the scytalone dehydratase-like protein dmxR17 and probable spontaneous re-oxidation, results in overall deoxygenation to chrysophanol. Baeyer-Villiger oxidation by the Baeyer-Villiger monooxygenase (BVMO) dmxR6 then yields monodictylactone in equilibrium with monodictyphenone. In the case of the cryptosporioptides biosynthesis, monodictylactone is reduced at C-12 to an alcohol (by the short chain dehydrogenases dmxR12 or dmxR8) and hydroxylated at C-5 by dmxR9, yielding the electron-rich aromatic which could eliminate H(2)O to form the ortho-quinonemethide, followed by tautomerisation to paraquinone and complete the formal reduction to produce the 10-methylgroup. Conjugate addition of C-4a-OH to the resulting paraquinone by the monooxygenase dmxR10 then gives cyclohexadienone, which is then reduced at C-5 by the short chain dehydrogenase dmxR3 to give the dihydroxanthone. The 6,7-epoxide in the cryptosporioptides could be introduced by the cytochrome P450 monooxygenase dmxL3. The highly reducing PKS dmxL2 manufactures butyrate, which is further carboxylated by dmxL1 to form ethylmalonate. It is not yet clear whether the carboxylation occurs while the butyrate is attached to the ACP of dmxL2, but this unusual fungal metabolite could then be esterified to O-5 by the O-acetyltransferase dmxR13. Finally, dimerization performed by dmxR5 gives the observed dimers cryptosporioptides A, B and C as the final products of the pathway. The sequence is that of Anthrone oxygenase dmxR16 from Cryptosporiopsis sp. (strain 8999).